Consider the following 302-residue polypeptide: Glycine--tRNA ligase alpha subunit (302 aa).

The protein belongs to the class-II aminoacyl-tRNA synthetase family. In terms of assembly, tetramer of two alpha and two beta subunits.

Its subcellular location is the cytoplasm. It carries out the reaction tRNA(Gly) + glycine + ATP = glycyl-tRNA(Gly) + AMP + diphosphate. The protein is Glycine--tRNA ligase alpha subunit of Haemophilus ducreyi (strain 35000HP / ATCC 700724).